Consider the following 61-residue polypeptide: Bactridin-1 (61 aa).

The LCN-type CS-alpha/beta domain occupies 1 to 61; that stretch reads KDGYIIEHRG…KIFDSNNLKC (61 aa). 4 disulfides stabilise this stretch: C11–C61, C15–C37, C23–C42, and C27–C44.

The protein belongs to the long (4 C-C) scorpion toxin superfamily. Sodium channel inhibitor family. Beta subfamily. Expressed by the venom gland.

The protein localises to the secreted. In terms of biological role, shows antibacterial activity against both Gram-positive bacteria (B.subtilis, M.luteus, E.faecalis) and Gram-negative bacteria (P.aeruginosa, Y.enterocolitica, A.calcoaceticus). Modifies membrane sodium permeability on Y.enterocolitica. Is toxic to cockroaches and crabs, but is not toxic to mice. Does not induce haemolysis in human erythrocytes. Acts by inhibiting the sodium (Nav) currents. This is Bactridin-1 from Tityus discrepans (Venezuelan scorpion).